The chain runs to 614 residues: Sodium- and chloride-dependent betaine transporter (614 aa).

At 1 to 44 the chain is on the cytoplasmic side; the sequence is MDRKVTVHEDGCPVVSWVPEEGEMMDQKDKDQVKDRGQWTNKME. 3 consecutive transmembrane segments (helical) span residues 45–65, 73–92, and 117–137; these read FVLS…FPYL, AFFI…VFFL, and GIGM…IIIL. Residues 138 to 210 are Extracellular-facing; that stretch reads AWALFYLFSS…SGIHDLGSLR (73 aa). Residues Asn-171 and Asn-183 are each glycosylated (N-linked (GlcNAc...) asparagine). 9 consecutive transmembrane segments (helical) span residues 211-229, 238-255, 291-308, 320-341, 374-393, 423-441, 458-478, 499-518, and 538-556; these read WELA…FCIW, VVYF…ILLI, IFFS…LGSY, IALC…FSIL, MPLS…FLGL, LLIL…LLVT, GICL…VYGA, ISWL…FSLS, and IGWL…FIII. At 557–614 the chain is on the cytoplasmic side; the sequence is TLLKTQGSFKKRLQRLITPDPSLPQPGRRSPQDGSSAQNCSTSPVKQELIAWEKETHL. Residues 574-600 are disordered; it reads TPDPSLPQPGRRSPQDGSSAQNCSTSP. The residue at position 586 (Ser-586) is a Phosphoserine. A compositionally biased stretch (polar residues) spans 588 to 600; that stretch reads QDGSSAQNCSTSP.

Belongs to the sodium:neurotransmitter symporter (SNF) (TC 2.A.22) family. SLC6A12 subfamily. In terms of assembly, interacts with LIN7C.

It is found in the basolateral cell membrane. The protein resides in the cell membrane. It carries out the reaction 4-aminobutanoate(out) + chloride(out) + 3 Na(+)(out) = 4-aminobutanoate(in) + chloride(in) + 3 Na(+)(in). The catalysed reaction is glycine betaine(out) + 2 chloride(out) + 3 Na(+)(out) = glycine betaine(in) + 2 chloride(in) + 3 Na(+)(in). Its function is as follows. Transporter that mediates cellular uptake of betaine and GABA in a sodium- and chloride-dependent process. May have a role in regulation of GABAergic transmission in the brain through the reuptake of GABA into presynaptic terminals, as well as in osmotic regulation. Probably also involved in renal and hepatic osmotic regulation. In Rattus norvegicus (Rat), this protein is Sodium- and chloride-dependent betaine transporter (Slc6a12).